A 183-amino-acid polypeptide reads, in one-letter code: Translation initiation factor IF-3 (183 aa).

Belongs to the IF-3 family. Monomer.

It localises to the cytoplasm. Its function is as follows. IF-3 binds to the 30S ribosomal subunit and shifts the equilibrium between 70S ribosomes and their 50S and 30S subunits in favor of the free subunits, thus enhancing the availability of 30S subunits on which protein synthesis initiation begins. In Yersinia pseudotuberculosis serotype O:1b (strain IP 31758), this protein is Translation initiation factor IF-3.